We begin with the raw amino-acid sequence, 264 residues long: Tryptophan synthase alpha chain (264 aa).

Active-site proton acceptor residues include Glu-49 and Asp-60.

This sequence belongs to the TrpA family. Tetramer of two alpha and two beta chains.

It catalyses the reaction (1S,2R)-1-C-(indol-3-yl)glycerol 3-phosphate + L-serine = D-glyceraldehyde 3-phosphate + L-tryptophan + H2O. It functions in the pathway amino-acid biosynthesis; L-tryptophan biosynthesis; L-tryptophan from chorismate: step 5/5. The alpha subunit is responsible for the aldol cleavage of indoleglycerol phosphate to indole and glyceraldehyde 3-phosphate. The protein is Tryptophan synthase alpha chain of Geotalea daltonii (strain DSM 22248 / JCM 15807 / FRC-32) (Geobacter daltonii).